The primary structure comprises 435 residues: Cyclic GMP-AMP synthase-like receptor (435 aa).

ATP-binding positions include serine 70 and 82–84 (EFD). Residues glutamate 82, aspartate 84, and aspartate 209 each coordinate Mg(2+). Aspartate 209 serves as a coordination point for GTP. Residues lysine 286 and 300 to 304 (SYYVK) each bind ATP. Residues leucine 311, aspartate 312, and aspartate 317 each coordinate Mn(2+).

Belongs to the mab-21 family. The cofactor is Mg(2+). It depends on Mn(2+) as a cofactor.

It carries out the reaction GTP + ATP = 2',3'-cGAMP + 2 diphosphate. It catalyses the reaction GTP + ATP = pppGp(2'-5')A + diphosphate. The enzyme catalyses pppGp(2'-5')A = 2',3'-cGAMP + diphosphate. Nucleotidyltransferase that catalyzes the formation of cyclic GMP-AMP (2',3'-cGAMP) from ATP and GTP and plays a key role in innate immunity. Directly binds some unknown ligand, activating the nucleotidyltransferase activity, leading to synthesis of 2',3'-cGAMP, a second messenger that binds to and activates Sting, thereby triggering the immune response via activation of the NF-kappa-B transcription factor. The protein is Cyclic GMP-AMP synthase-like receptor of Ctenocephalides felis (Cat flea).